Here is a 740-residue protein sequence, read N- to C-terminus: Dipeptidyl peptidase family member 6 (740 aa).

Position 1 (M1) is a topological domain, cytoplasmic. A helical; Signal-anchor for type II membrane protein membrane pass occupies residues 2 to 22 (LFLPILILNLLIITHAIDIIP). Residues 23–740 (REVLFQDPKY…VMNRIFPVQG (718 aa)) are Lumenal-facing. Residues N108, N308, and N506 are each glycosylated (N-linked (GlcNAc...) asparagine). Residues S516, D604, and H636 each act as charge relay system in the active site. An intrachain disulfide couples C535 to C658. Residue N672 is glycosylated (N-linked (GlcNAc...) asparagine).

Belongs to the peptidase S9B family. DPPIV subfamily.

Its subcellular location is the cell membrane. In terms of biological role, removes N-terminal dipeptides sequentially from polypeptides. Essential for control of distal tip cell migration. This Caenorhabditis elegans protein is Dipeptidyl peptidase family member 6 (dpf-6).